Consider the following 147-residue polypeptide: Large ribosomal subunit protein uL15 (147 aa).

Residues 1–47 (MKLHELKPAEGAVRAKRRLGRGTATGQGKTAGRGQKGQWSRSGGGVR) form a disordered region. Residues 23-35 (TATGQGKTAGRGQ) are compositionally biased toward gly residues.

This sequence belongs to the universal ribosomal protein uL15 family. As to quaternary structure, part of the 50S ribosomal subunit.

Its function is as follows. Binds to the 23S rRNA. In Clostridioides difficile (strain 630) (Peptoclostridium difficile), this protein is Large ribosomal subunit protein uL15.